Consider the following 545-residue polypeptide: Probable zinc metalloprotease EGY2, chloroplastic (545 aa).

The transit peptide at 1–63 (MQLPAMSCSP…QIRNRRFVCQ (63 aa)) directs the protein to the chloroplast. The segment at 66 to 142 (TETEPDGDGN…DATPASDAQE (77 aa)) is disordered. Positions 68–85 (TEPDGDGNGDEEKEELGD) are enriched in acidic residues. Polar residues-rich tracts occupy residues 88–109 (SSPS…TNAD) and 117–129 (NTEP…TVQN). 7 helical membrane passes run 256-276 (AVPE…TLLL), 300-320 (VYGA…HILA), 325-345 (GIKL…FGAI), 363-383 (AAGP…GFIL), 426-446 (PLVL…IPAG), 473-493 (LLGI…LIFF), and 513-533 (YISI…PYPF).

Belongs to the peptidase M50B family.

It localises to the plastid. Its subcellular location is the chloroplast membrane. Its function is as follows. Probable membrane-associated metalloprotease that may be involved in chloroplast development. The polypeptide is Probable zinc metalloprotease EGY2, chloroplastic (EGY2) (Oryza sativa subsp. indica (Rice)).